We begin with the raw amino-acid sequence, 536 residues long: MKETGIHNKAASISTSGLKELSAVFYNLGPARLYEETIRRGEAELSAQGALVARTGQHTGRSPKDKFVVRDANTEDHVWWDNNKPMTPEAFELLYADFIEHAKGRELFVQDLIGGADADNKINARVITEYAWHSLFIRNLLIRPSQEALASYVPEMTIIDLPSFKADPERYGVRTETVIAVDLTRKIVLIGGTSYAGEMKKSVFTALNYILPAKGVMPMHCSANEGPNGDTAVFFGLSGTGKTTLSADPTRTLIGDDEHGWGEHGVFNFEGGCYAKTIRLSAEAEPEIYATTQRFGTVLENVVLDENRQPDFDDGSLTENTRCAYPLDFIPNASKSGKGGQPKNIIMLTADAFGVMPPIAKLTPAQAMYHFLSGYTAKVAATEKGVTEPEATFSTCFGAPFMPRHPSEYGNLLRKLIAEHKVDCWLVNTGWTGGAYGVGKRMPIKATRALLAAALDGSLNNAEFRIDPNFGFAVPVEVPGVESSILDPRSTWADKVAYDAQAKKLVDMFVSNFEKFESHVDHEVKDAAPAIRMAAE.

Substrate-binding residues include Arg61, Tyr195, and Lys201. Residues Lys201, His220, and 236-244 (GLSGTGKTT) each bind ATP. The Mn(2+) site is built by Lys201 and His220. Mn(2+) is bound at residue Asp257. ATP contacts are provided by Glu285, Arg322, and Thr447. A substrate-binding site is contributed by Arg322.

The protein belongs to the phosphoenolpyruvate carboxykinase (ATP) family. Mn(2+) serves as cofactor.

The protein localises to the cytoplasm. It carries out the reaction oxaloacetate + ATP = phosphoenolpyruvate + ADP + CO2. The protein operates within carbohydrate biosynthesis; gluconeogenesis. Functionally, involved in the gluconeogenesis. Catalyzes the conversion of oxaloacetate (OAA) to phosphoenolpyruvate (PEP) through direct phosphoryl transfer between the nucleoside triphosphate and OAA. The sequence is that of Phosphoenolpyruvate carboxykinase (ATP) from Brucella melitensis biotype 1 (strain ATCC 23456 / CCUG 17765 / NCTC 10094 / 16M).